We begin with the raw amino-acid sequence, 196 residues long: Probable inactive nicotinamidase At3g16190 (196 aa).

This sequence belongs to the isochorismatase family.

Its function is as follows. Does not possess nicotinamidase activity in vitro. The chain is Probable inactive nicotinamidase At3g16190 from Arabidopsis thaliana (Mouse-ear cress).